Reading from the N-terminus, the 171-residue chain is ATP synthase subunit b (171 aa).

The helical transmembrane segment at 12–34 threads the bilayer; it reads FALNLNLFETNVINLAVVAFGLY.

The protein belongs to the ATPase B chain family. F-type ATPases have 2 components, F(1) - the catalytic core - and F(0) - the membrane proton channel. F(1) has five subunits: alpha(3), beta(3), gamma(1), delta(1), epsilon(1). F(0) has four main subunits: a(1), b(1), b'(1) and c(10-14). The alpha and beta chains form an alternating ring which encloses part of the gamma chain. F(1) is attached to F(0) by a central stalk formed by the gamma and epsilon chains, while a peripheral stalk is formed by the delta, b and b' chains.

Its subcellular location is the cellular thylakoid membrane. F(1)F(0) ATP synthase produces ATP from ADP in the presence of a proton or sodium gradient. F-type ATPases consist of two structural domains, F(1) containing the extramembraneous catalytic core and F(0) containing the membrane proton channel, linked together by a central stalk and a peripheral stalk. During catalysis, ATP synthesis in the catalytic domain of F(1) is coupled via a rotary mechanism of the central stalk subunits to proton translocation. Its function is as follows. Component of the F(0) channel, it forms part of the peripheral stalk, linking F(1) to F(0). The protein is ATP synthase subunit b of Prochlorococcus marinus (strain SARG / CCMP1375 / SS120).